The primary structure comprises 716 residues: Polyribonucleotide nucleotidyltransferase (716 aa).

The Mg(2+) site is built by Asp-493 and Asp-499. The KH domain occupies 560–619 (PRMITIKINPEKIRDVIGKGGSVIRALTEETGTTIDISDDGVVTIASTSSEGMAEAKKRI). One can recognise an S1 motif domain in the interval 629–697 (GQVYEGTVLK…EKGRVRLSAK (69 aa)).

It belongs to the polyribonucleotide nucleotidyltransferase family. The cofactor is Mg(2+).

It is found in the cytoplasm. The catalysed reaction is RNA(n+1) + phosphate = RNA(n) + a ribonucleoside 5'-diphosphate. Its function is as follows. Involved in mRNA degradation. Catalyzes the phosphorolysis of single-stranded polyribonucleotides processively in the 3'- to 5'-direction. This chain is Polyribonucleotide nucleotidyltransferase, found in Paraburkholderia xenovorans (strain LB400).